The sequence spans 555 residues: Suppressor of tumorigenicity 7 protein-like (555 aa).

Transmembrane regions (helical) follow at residues 32-52 (APWARGLLAVAAGLGLFYAAL), 76-96 (FYFALTVTSSFISGLIFVFEW), 504-524 (LPFFIHFTAGLCSFSAMLALL), and 531-551 (LMVVFAKAVLRVLWPVSAPSV).

It belongs to the ST7 family.

It is found in the membrane. This Gallus gallus (Chicken) protein is Suppressor of tumorigenicity 7 protein-like (ST7L).